We begin with the raw amino-acid sequence, 101 residues long: UPF0473 protein EF_1204 (101 aa).

Belongs to the UPF0473 family.

This chain is UPF0473 protein EF_1204, found in Enterococcus faecalis (strain ATCC 700802 / V583).